The sequence spans 216 residues: MIF4G domain-containing protein A (216 aa).

One can recognise an MIF4G domain in the interval 2–199 (DSAWTALDME…LEILEFRASG (198 aa)).

Belongs to the MIF4GD family. As to quaternary structure, interacts with eif4g1, eif4g2 and slbp; probably tethered by SLBP to the 3'-end of mRNAs ending with the histone stem-loop, it also interacts with eif4g1 which is bound to their 5'-end.

It localises to the cytoplasm. It is found in the nucleus. Functions in replication-dependent translation of histone mRNAs which differ from other eukaryotic mRNAs in that they do not end with a poly-A tail but a stem-loop. May participate in circularizing those mRNAs specifically enhancing their translation. This is MIF4G domain-containing protein A (mif4gda) from Danio rerio (Zebrafish).